Reading from the N-terminus, the 363-residue chain is Outer membrane porin F (363 aa).

Residues 1–22 (MMKRKILAAVIPALLAAATANA) form the signal peptide.

Belongs to the Gram-negative porin family. In terms of assembly, homotrimer. Forms mixed heterotrimers with OmpC and with PhoE; other mixed heterotrimers with other porins are also probable.

The protein resides in the cell outer membrane. Forms pores that allow passive diffusion of small molecules across the outer membrane. This is Outer membrane porin F from Salmonella typhimurium (strain SL1344).